The sequence spans 441 residues: tRNA-2-methylthio-N(6)-dimethylallyladenosine synthase (441 aa).

The MTTase N-terminal domain occupies 5-120; it reads KLLYIETFGC…LPEMVRAAEQ (116 aa). Cys14, Cys50, Cys83, Cys158, Cys162, and Cys165 together coordinate [4Fe-4S] cluster. In terms of domain architecture, Radical SAM core spans 144–374; sequence EGGGVTRFVT…QGLQRDMTIE (231 aa). The 63-residue stretch at 377-439 folds into the TRAM domain; it reads AGFVGTCQAV…PNSLLGELAV (63 aa).

It belongs to the methylthiotransferase family. MiaB subfamily. In terms of assembly, monomer. The cofactor is [4Fe-4S] cluster.

It localises to the cytoplasm. The catalysed reaction is N(6)-dimethylallyladenosine(37) in tRNA + (sulfur carrier)-SH + AH2 + 2 S-adenosyl-L-methionine = 2-methylsulfanyl-N(6)-dimethylallyladenosine(37) in tRNA + (sulfur carrier)-H + 5'-deoxyadenosine + L-methionine + A + S-adenosyl-L-homocysteine + 2 H(+). Its function is as follows. Catalyzes the methylthiolation of N6-(dimethylallyl)adenosine (i(6)A), leading to the formation of 2-methylthio-N6-(dimethylallyl)adenosine (ms(2)i(6)A) at position 37 in tRNAs that read codons beginning with uridine. This is tRNA-2-methylthio-N(6)-dimethylallyladenosine synthase from Geobacter metallireducens (strain ATCC 53774 / DSM 7210 / GS-15).